A 431-amino-acid polypeptide reads, in one-letter code: 3-phosphoshikimate 1-carboxyvinyltransferase (431 aa).

3-phosphoshikimate-binding residues include lysine 22, serine 23, and arginine 27. Lysine 22 contributes to the phosphoenolpyruvate binding site. Phosphoenolpyruvate-binding residues include glycine 94 and arginine 122. 3-phosphoshikimate is bound by residues serine 167, glutamine 169, aspartate 315, and lysine 342. Glutamine 169 is a binding site for phosphoenolpyruvate. Aspartate 315 acts as the Proton acceptor in catalysis. Positions 346 and 388 each coordinate phosphoenolpyruvate.

This sequence belongs to the EPSP synthase family. As to quaternary structure, monomer.

Its subcellular location is the cytoplasm. The catalysed reaction is 3-phosphoshikimate + phosphoenolpyruvate = 5-O-(1-carboxyvinyl)-3-phosphoshikimate + phosphate. The protein operates within metabolic intermediate biosynthesis; chorismate biosynthesis; chorismate from D-erythrose 4-phosphate and phosphoenolpyruvate: step 6/7. In terms of biological role, catalyzes the transfer of the enolpyruvyl moiety of phosphoenolpyruvate (PEP) to the 5-hydroxyl of shikimate-3-phosphate (S3P) to produce enolpyruvyl shikimate-3-phosphate and inorganic phosphate. This is 3-phosphoshikimate 1-carboxyvinyltransferase from Pelobacter propionicus (strain DSM 2379 / NBRC 103807 / OttBd1).